The chain runs to 223 residues: HTH-type transcriptional dual regulator CecR (223 aa).

Residues 11 to 70 (EQAKKQLIAAALAQFGEYGMNATTREIAAQAGQNIAAITYYFGSKEDLYLACAQWIADFI) form the HTH tetR-type domain. The H-T-H motif DNA-binding region spans 33–52 (TTREIAAQAGQNIAAITYYF).

The protein resides in the cytoplasm. In terms of biological role, regulates transcription of the cecR-ybhGFSR operon and the rhlE gene, which altogether are involved in the control of sensitivity to cefoperazone and chloramphenicol. Represses the cecR-ybhGFSR operon and activates the rhlE operon. Acts by binding to a palindromic sequence within the intergenic spacer located between these two divergently transcribed operons. The chain is HTH-type transcriptional dual regulator CecR from Shigella flexneri.